We begin with the raw amino-acid sequence, 222 residues long: Peroxisomal membrane protein 11-4 (222 aa).

Residues methionine 1–glutamate 81 lie on the Cytoplasmic side of the membrane. Residues phenylalanine 82 to phenylalanine 102 form a helical membrane-spanning segment. At threonine 103–proline 196 the chain is on the lumenal side. A helical membrane pass occupies residues phenylalanine 197–tyrosine 217. Residues arginine 218 to serine 222 lie on the Cytoplasmic side of the membrane.

Belongs to the peroxin-11 family. In terms of tissue distribution, expressed in seedlings, shoots, leaf sheaths and flag leaf.

It localises to the peroxisome membrane. Functionally, involved in peroxisomal proliferation. This is Peroxisomal membrane protein 11-4 (PEX11-4) from Oryza sativa subsp. indica (Rice).